The sequence spans 282 residues: F-box/SPRY domain-containing protein 1 (282 aa).

Positions 1 to 32 are disordered; it reads MAAAAINAAAPPPPVAPTAPPPPPPPPLSQAS. Positions 10 to 28 are enriched in pro residues; that stretch reads APPPPVAPTAPPPPPPPPL. One can recognise an F-box domain in the interval 29 to 78; it reads SQASGRLPSRVLELVFSYLDLPDLRSCGLVCKHWYRCLHGDENSEVWRSL. The B30.2/SPRY domain maps to 88 to 280; sequence LRTDILCNLP…VTLVYLGKPL (193 aa).

Belongs to the FBXO45/Fsn family. As to quaternary structure, probable component of a E3 ubiquitin ligase complex.

Its pathway is protein modification; protein ubiquitination. The sequence is that of F-box/SPRY domain-containing protein 1 (fbxo45) from Xenopus tropicalis (Western clawed frog).